Here is a 397-residue protein sequence, read N- to C-terminus: MSESVHTNTSLWSKGMKAVIVAQFLSAFGDNALLFATLALLKAQFYPEWSQPILQMVFVGAYILFAPFVGQVADSFAKGRVMMFANGLKLLGAASICFGINPFLGYTLVGVGAAAYSPAKYGILGELTTGSKLVKANGLMEASTIAAILLGSVAGGVLADWHVLVALAACALAYGGAVVANIYIPKLAAARPGQSWNLINMTRSFLNACTSLWRNGETRFSLVGTSLFWGAGVTLRFLLVLWVPVALGITDNATPTYLNAMVAIGIVVGAGAAAKLVTLETVSRCMPAGILIGVVVLIFSLQHELLPAYALLMLIGVLGGFFVVPLNALLQERGKKSVGAGNAIAVQNLGENSAMLLMLGIYSLAVMVGIPVVPIGIGFGALFALAITALWIWQRRY.

The Periplasmic portion of the chain corresponds to 1-17; that stretch reads MSESVHTNTSLWSKGMK. The chain crosses the membrane as a helical span at residues 18-38; it reads AVIVAQFLSAFGDNALLFATL. The Cytoplasmic portion of the chain corresponds to 39-52; that stretch reads ALLKAQFYPEWSQP. The chain crosses the membrane as a helical span at residues 53-73; sequence ILQMVFVGAYILFAPFVGQVA. At 74-90 the chain is on the periplasmic side; it reads DSFAKGRVMMFANGLKL. A helical transmembrane segment spans residues 91 to 111; the sequence is LGAASICFGINPFLGYTLVGV. Residues 112-144 lie on the Cytoplasmic side of the membrane; sequence GAAAYSPAKYGILGELTTGSKLVKANGLMEAST. A helical membrane pass occupies residues 145-165; sequence IAAILLGSVAGGVLADWHVLV. Position 166 (Ala-166) is a topological domain, periplasmic. A helical membrane pass occupies residues 167–187; the sequence is LAACALAYGGAVVANIYIPKL. Residues 188 to 226 lie on the Cytoplasmic side of the membrane; the sequence is AAARPGQSWNLINMTRSFLNACTSLWRNGETRFSLVGTS. A helical membrane pass occupies residues 227 to 247; the sequence is LFWGAGVTLRFLLVLWVPVAL. At 248-256 the chain is on the periplasmic side; sequence GITDNATPT. A helical transmembrane segment spans residues 257 to 277; sequence YLNAMVAIGIVVGAGAAAKLV. Residues 278 to 280 lie on the Cytoplasmic side of the membrane; sequence TLE. A helical membrane pass occupies residues 281–301; it reads TVSRCMPAGILIGVVVLIFSL. Topologically, residues 302 to 304 are periplasmic; it reads QHE. The chain crosses the membrane as a helical span at residues 305–325; sequence LLPAYALLMLIGVLGGFFVVP. The Cytoplasmic segment spans residues 326-343; it reads LNALLQERGKKSVGAGNA. Residues 344–364 traverse the membrane as a helical segment; sequence IAVQNLGENSAMLLMLGIYSL. Topologically, residues 365–366 are periplasmic; it reads AV. A helical transmembrane segment spans residues 367-387; sequence MVGIPVVPIGIGFGALFALAI. The Cytoplasmic portion of the chain corresponds to 388–397; it reads TALWIWQRRY.

This sequence belongs to the major facilitator superfamily. LplT (TC 2.A.1.42) family.

The protein localises to the cell inner membrane. Its function is as follows. Catalyzes the facilitated diffusion of 2-acyl-glycero-3-phosphoethanolamine (2-acyl-GPE) into the cell. This Escherichia coli O127:H6 (strain E2348/69 / EPEC) protein is Lysophospholipid transporter LplT.